Here is a 118-residue protein sequence, read N- to C-terminus: uncharacterized protein (118 aa).

A helical membrane pass occupies residues 41-61 (IFLLIIITIIFALTMYTSVQV).

Its subcellular location is the host membrane. This is an uncharacterized protein from Ostreid herpesvirus 1 (isolate France) (OsHV-1).